A 341-amino-acid polypeptide reads, in one-letter code: L-threonine 3-dehydrogenase (341 aa).

A Zn(2+)-binding site is contributed by cysteine 38. Active-site charge relay system residues include threonine 40 and histidine 43. Histidine 63, glutamate 64, cysteine 93, cysteine 96, cysteine 99, and cysteine 107 together coordinate Zn(2+). NAD(+)-binding positions include isoleucine 175, aspartate 195, arginine 200, 262–264 (LGI), and 286–287 (IY).

This sequence belongs to the zinc-containing alcohol dehydrogenase family. In terms of assembly, homotetramer. It depends on Zn(2+) as a cofactor.

Its subcellular location is the cytoplasm. It carries out the reaction L-threonine + NAD(+) = (2S)-2-amino-3-oxobutanoate + NADH + H(+). The protein operates within amino-acid degradation; L-threonine degradation via oxydo-reductase pathway; glycine from L-threonine: step 1/2. Catalyzes the NAD(+)-dependent oxidation of L-threonine to 2-amino-3-ketobutyrate. This chain is L-threonine 3-dehydrogenase, found in Alteromonas mediterranea (strain DSM 17117 / CIP 110805 / LMG 28347 / Deep ecotype).